Consider the following 544-residue polypeptide: Chaperonin GroEL (544 aa).

ATP contacts are provided by residues 29 to 32 (TLGP), 86 to 90 (DGTTT), glycine 413, 478 to 480 (NAA), and aspartate 494.

Belongs to the chaperonin (HSP60) family. In terms of assembly, forms a cylinder of 14 subunits composed of two heptameric rings stacked back-to-back. Interacts with the co-chaperonin GroES.

The protein localises to the cytoplasm. It catalyses the reaction ATP + H2O + a folded polypeptide = ADP + phosphate + an unfolded polypeptide.. Its function is as follows. Together with its co-chaperonin GroES, plays an essential role in assisting protein folding. The GroEL-GroES system forms a nano-cage that allows encapsulation of the non-native substrate proteins and provides a physical environment optimized to promote and accelerate protein folding. The sequence is that of Chaperonin GroEL from Lysinibacillus sphaericus (strain C3-41).